The primary structure comprises 414 residues: MLSAQQFLKEFNNVESLDESLYEIVSQICEEVKLQGDKALKNYNLQFDQVETEKLELEQSQLKNAYDMLDNETRDALEQSYQRIKVYQENIKVKQESSQQTECYERYHPIERVGIYVPGGKASYPSTVLMTATLAQVAGVNEITVVTPPQNSGICQEVLAACYITGVHHVYQVGGAQSIAALTYGTETIKKVDKIVGPGNQYVAYAKKFVFGQVGIDQIAGPTEIALIIDESADLDAIAYDVFAQAEHDEMACTYVISENEKVLNQLNTIIQEKLQYVERQDIISQSIANHHYLILAQDTEEACLIMNTIAPEHASIQTRAPEMYIDKVKYVGALFLGHFSPEVIGDYVAGPSHVLPTNQTARFTNGLSVNDFMTRHSVIHLSQKTFNEVAESAEHIAHIESLFNHEKSIHVRR.

Positions 116, 177, and 200 each coordinate NAD(+). Positions 223, 245, and 248 each coordinate substrate. Residues Q245 and H248 each coordinate Zn(2+). Catalysis depends on proton acceptor residues E313 and H314. Substrate contacts are provided by H314, D347, E401, and H406. Residue D347 participates in Zn(2+) binding. Residue H406 participates in Zn(2+) binding.

The protein belongs to the histidinol dehydrogenase family. Zn(2+) is required as a cofactor.

The catalysed reaction is L-histidinol + 2 NAD(+) + H2O = L-histidine + 2 NADH + 3 H(+). It participates in amino-acid biosynthesis; L-histidine biosynthesis; L-histidine from 5-phospho-alpha-D-ribose 1-diphosphate: step 9/9. In terms of biological role, catalyzes the sequential NAD-dependent oxidations of L-histidinol to L-histidinaldehyde and then to L-histidine. This Staphylococcus epidermidis (strain ATCC 35984 / DSM 28319 / BCRC 17069 / CCUG 31568 / BM 3577 / RP62A) protein is Histidinol dehydrogenase.